The following is a 402-amino-acid chain: Alkane 1-monooxygenase (402 aa).

The next 4 membrane-spanning stretches (helical) occupy residues 20 to 40 (YFWI…WLAN), 42 to 62 (TGWG…LPLL), 89 to 109 (VLTY…AWWV), and 114 to 134 (MSWF…GLAL). The Fe cation site is built by histidine 138 and histidine 142. A helical membrane pass occupies residues 146–166 (AFDRWMAKIVLAVVGYGHFFI). Residues histidine 168, histidine 172, and histidine 173 each contribute to the Fe cation site. Residues 236–256 (VVLYTLLLAFFGPKMLVFLPI) form a helical membrane-spanning segment. Fe cation contacts are provided by histidine 312, histidine 315, and histidine 316.

This sequence belongs to the fatty acid desaturase type 1 family. AlkB subfamily. The cofactor is Fe(3+).

It localises to the cell inner membrane. It carries out the reaction octane + 2 reduced [rubredoxin] + O2 + 2 H(+) = 2 oxidized [rubredoxin] + octan-1-ol + H2O. It participates in hydrocarbon metabolism; alkane degradation. In terms of biological role, catalyzes the hydroxylation of n-alkanes in the presence of a NADH-rubredoxin reductase and rubredoxin. The protein is Alkane 1-monooxygenase (alkB) of Pseudomonas putida (Arthrobacter siderocapsulatus).